A 464-amino-acid polypeptide reads, in one-letter code: NADH-ubiquinone oxidoreductase chain 4 (464 aa).

Helical transmembrane passes span 18–38, 54–74, 79–99, 102–122, 131–151, 168–188, 207–227, 239–259, 266–286, 297–317, 332–352, 375–395, and 420–440; these read LLPT…VLPT, IADI…IANW, SLLY…NFMC, MLSF…LIGL, AADY…LAIG, VVLS…GIMV, PLAG…YAII, VLYT…TSII, LKVI…LGIL, LILS…VGGI, GLLT…FSNI, TILG…MLKV, and LLMI…NGII.

It belongs to the complex I subunit 4 family.

Its subcellular location is the mitochondrion membrane. It catalyses the reaction a ubiquinone + NADH + 5 H(+)(in) = a ubiquinol + NAD(+) + 4 H(+)(out). Core subunit of the mitochondrial membrane respiratory chain NADH dehydrogenase (Complex I) that is believed to belong to the minimal assembly required for catalysis. Complex I functions in the transfer of electrons from NADH to the respiratory chain. The immediate electron acceptor for the enzyme is believed to be ubiquinone. The chain is NADH-ubiquinone oxidoreductase chain 4 (NAD4) from Candida albicans (strain SC5314 / ATCC MYA-2876) (Yeast).